Reading from the N-terminus, the 375-residue chain is RING-H2 finger protein ATL16 (375 aa).

The tract at residues 1–20 (MDLSNRRNPLRDLSFPPPPP) is disordered. A helical transmembrane segment spans residues 39–59 (VAVIGILATAFLLVSYYVFVI). The RING-type; atypical zinc finger occupies 138 to 180 (CSVCLSEFQDEEKLRIIPNCSHLFHIDCIDVWLQNNANCPLCR). Disordered stretches follow at residues 223-266 (GSDR…DRGG) and 356-375 (SFGS…YFEP). Residues 238–257 (QERSNSGYLLNENTQNSISP) show a composition bias toward polar residues.

Belongs to the RING-type zinc finger family. ATL subfamily.

It localises to the membrane. It catalyses the reaction S-ubiquitinyl-[E2 ubiquitin-conjugating enzyme]-L-cysteine + [acceptor protein]-L-lysine = [E2 ubiquitin-conjugating enzyme]-L-cysteine + N(6)-ubiquitinyl-[acceptor protein]-L-lysine.. It participates in protein modification; protein ubiquitination. This is RING-H2 finger protein ATL16 (ATL16) from Arabidopsis thaliana (Mouse-ear cress).